The sequence spans 464 residues: Glutamate--tRNA ligase (464 aa).

The 'HIGH' region signature appears at 8–18 (PSPTGYMHLGN). Zn(2+) is bound by residues Cys-96, Cys-98, Cys-123, and His-125. A 'KMSKS' region motif is present at residues 240-244 (KLSKR). Position 243 (Lys-243) interacts with ATP.

This sequence belongs to the class-I aminoacyl-tRNA synthetase family. Glutamate--tRNA ligase type 1 subfamily. In terms of assembly, monomer. Zn(2+) serves as cofactor.

Its subcellular location is the cytoplasm. The catalysed reaction is tRNA(Glu) + L-glutamate + ATP = L-glutamyl-tRNA(Glu) + AMP + diphosphate. Its function is as follows. Catalyzes the attachment of glutamate to tRNA(Glu) in a two-step reaction: glutamate is first activated by ATP to form Glu-AMP and then transferred to the acceptor end of tRNA(Glu). The protein is Glutamate--tRNA ligase of Hydrogenobaculum sp. (strain Y04AAS1).